The chain runs to 169 residues: MSVLQVLHFPDERLRIVAKPVKEVNANIQRIVDDMFETMYAEEGIGLAATQVDIHQRIIVIDVSEDRDERLVLIDPELLEKSGETGIEEGCLSIPEQRALVPRAEKVKIRALDRDGNSFELEADGLLAICIQHEMDHLVGKLFIDYLSPMKRQRIRQKLEKLYRQSARD.

Fe cation-binding residues include C91 and H133. The active site involves E134. Fe cation is bound at residue H137.

This sequence belongs to the polypeptide deformylase family. Fe(2+) serves as cofactor.

The catalysed reaction is N-terminal N-formyl-L-methionyl-[peptide] + H2O = N-terminal L-methionyl-[peptide] + formate. Functionally, removes the formyl group from the N-terminal Met of newly synthesized proteins. Requires at least a dipeptide for an efficient rate of reaction. N-terminal L-methionine is a prerequisite for activity but the enzyme has broad specificity at other positions. The chain is Peptide deformylase from Erwinia tasmaniensis (strain DSM 17950 / CFBP 7177 / CIP 109463 / NCPPB 4357 / Et1/99).